The chain runs to 259 residues: ATP synthase subunit a (259 aa).

A run of 5 helical transmembrane segments spans residues threonine 29–phenylalanine 49, isoleucine 90–isoleucine 110, aspartate 134–isoleucine 154, leucine 208–proline 228, and alanine 230–valine 250.

The protein belongs to the ATPase A chain family. As to quaternary structure, F-type ATPases have 2 components, CF(1) - the catalytic core - and CF(0) - the membrane proton channel. CF(1) has five subunits: alpha(3), beta(3), gamma(1), delta(1), epsilon(1). CF(0) has three main subunits: a(1), b(2) and c(9-12). The alpha and beta chains form an alternating ring which encloses part of the gamma chain. CF(1) is attached to CF(0) by a central stalk formed by the gamma and epsilon chains, while a peripheral stalk is formed by the delta and b chains.

It is found in the cell inner membrane. In terms of biological role, key component of the proton channel; it plays a direct role in the translocation of protons across the membrane. This chain is ATP synthase subunit a, found in Aeromonas salmonicida (strain A449).